A 425-amino-acid polypeptide reads, in one-letter code: 3-isopropylmalate dehydratase large subunit (425 aa).

The [4Fe-4S] cluster site is built by C305, C365, and C368.

It belongs to the aconitase/IPM isomerase family. LeuC type 2 subfamily. Heterodimer of LeuC and LeuD. Requires [4Fe-4S] cluster as cofactor.

The catalysed reaction is (2R,3S)-3-isopropylmalate = (2S)-2-isopropylmalate. Its pathway is amino-acid biosynthesis; L-leucine biosynthesis; L-leucine from 3-methyl-2-oxobutanoate: step 2/4. In terms of biological role, catalyzes the isomerization between 2-isopropylmalate and 3-isopropylmalate, via the formation of 2-isopropylmaleate. This is 3-isopropylmalate dehydratase large subunit from Clostridioides difficile (strain 630) (Peptoclostridium difficile).